Here is a 362-residue protein sequence, read N- to C-terminus: tRNA-specific 2-thiouridylase MnmA 1 (362 aa).

Residues 12–19 (GMSGGVDS) and M38 each bind ATP. The active-site Nucleophile is the C104. C104 and C200 are oxidised to a cystine. G128 is an ATP binding site. The interaction with tRNA stretch occupies residues 150–152 (KDQ). C200 (cysteine persulfide intermediate) is an active-site residue. The interaction with tRNA stretch occupies residues 306–307 (RY).

The protein belongs to the MnmA/TRMU family.

The protein resides in the cytoplasm. The catalysed reaction is S-sulfanyl-L-cysteinyl-[protein] + uridine(34) in tRNA + AH2 + ATP = 2-thiouridine(34) in tRNA + L-cysteinyl-[protein] + A + AMP + diphosphate + H(+). Its function is as follows. Catalyzes the 2-thiolation of uridine at the wobble position (U34) of tRNA, leading to the formation of s(2)U34. This Clostridium tetani (strain Massachusetts / E88) protein is tRNA-specific 2-thiouridylase MnmA 1.